Consider the following 423-residue polypeptide: Sulfate adenylyltransferase (423 aa).

Positions 207 and 209 each coordinate sulfate. ATP contacts are provided by residues 207–210 (QLRN) and 301–304 (GRDH). Residues R209 and N210 contribute to the active site. A305 is a sulfate binding site.

The protein belongs to the sulfate adenylyltransferase family.

Its subcellular location is the mitosome. The catalysed reaction is sulfate + ATP + H(+) = adenosine 5'-phosphosulfate + diphosphate. The protein operates within sulfur metabolism; hydrogen sulfide biosynthesis; sulfite from sulfate: step 1/3. Catalyzes the first intracellular reaction of sulfate assimilation, forming adenosine-5'-phosphosulfate (APS) from inorganic sulfate and ATP. The chain is Sulfate adenylyltransferase from Entamoeba histolytica (strain ATCC 30459 / HM-1:IMSS / ABRM).